We begin with the raw amino-acid sequence, 485 residues long: NGFI-A-binding protein 1 (485 aa).

Residues 4–82 (ALPRTLGELQ…RDWVTNPGLF (79 aa)) are NCD1. Residues Lys-126, Lys-129, and Lys-143 each participate in a glycyl lysine isopeptide (Lys-Gly) (interchain with G-Cter in SUMO2) cross-link. Positions 160–187 (WQGHHATESEHSLSPADVGSPASPKESS) are disordered. Residues Ser-171 and Ser-182 each carry the phosphoserine modification. Lys-211 participates in a covalent cross-link: Glycyl lysine isopeptide (Lys-Gly) (interchain with G-Cter in SUMO2). The NCD2 stretch occupies residues 220 to 309 (LLKNNKKLAK…ARQVSREVTY (90 aa)). The tract at residues 306 to 337 (EVTYKYTYRTTRLKCGERDELSPKRIKVEDGF) is necessary for nuclear localization. Ser-327 carries the post-translational modification Phosphoserine. Lys-332 participates in a covalent cross-link: Glycyl lysine isopeptide (Lys-Gly) (interchain with G-Cter in SUMO1); alternate. Lys-332 participates in a covalent cross-link: Glycyl lysine isopeptide (Lys-Gly) (interchain with G-Cter in SUMO2); alternate. Residues Lys-354, Lys-368, and Lys-372 each participate in a glycyl lysine isopeptide (Lys-Gly) (interchain with G-Cter in SUMO2) cross-link. Residues 398-432 (RQSSGEHSPDGLPSDGSDGQGERPLNLRMPNVQNR) are disordered. Ser-405 is modified (phosphoserine). Glycyl lysine isopeptide (Lys-Gly) (interchain with G-Cter in SUMO2) cross-links involve residues Lys-452, Lys-463, and Lys-475. Lys-478 is covalently cross-linked (Glycyl lysine isopeptide (Lys-Gly) (interchain with G-Cter in SUMO1); alternate). Lys-478 participates in a covalent cross-link: Glycyl lysine isopeptide (Lys-Gly) (interchain with G-Cter in SUMO2); alternate.

It belongs to the NAB family. As to quaternary structure, homomultimers may associate with EGR1 bound to DNA.

Its subcellular location is the nucleus. In terms of biological role, acts as a transcriptional repressor for zinc finger transcription factors EGR1 and EGR2. In Mesocricetus auratus (Golden hamster), this protein is NGFI-A-binding protein 1 (NAB1).